The chain runs to 541 residues: Malate synthase (541 aa).

Arg169 (proton acceptor) is an active-site residue. Residue Asp454 is the Proton donor of the active site.

It belongs to the malate synthase family.

It localises to the cytoplasm. It catalyses the reaction glyoxylate + acetyl-CoA + H2O = (S)-malate + CoA + H(+). It functions in the pathway carbohydrate metabolism; glyoxylate cycle; (S)-malate from isocitrate: step 2/2. The sequence is that of Malate synthase (aceB) from Streptomyces clavuligerus.